Here is a 424-residue protein sequence, read N- to C-terminus: 3-oxo-tetronate kinase (424 aa).

ATP-binding positions include Ser-264, Gly-363–Thr-366, and Gly-408.

Belongs to the four-carbon acid sugar kinase family.

The catalysed reaction is 3-dehydro-L-erythronate + ATP = 3-dehydro-4-O-phospho-L-erythronate + ADP + H(+). The enzyme catalyses 3-dehydro-D-erythronate + ATP = 3-dehydro-4-O-phospho-D-erythronate + ADP + H(+). Its function is as follows. Catalyzes the ATP-dependent phosphorylation of 3-oxo-tetronate to 3-oxo-tetronate 4-phosphate. This chain is 3-oxo-tetronate kinase, found in Methylobacterium radiotolerans (strain ATCC 27329 / DSM 1819 / JCM 2831 / NBRC 15690 / NCIMB 10815 / 0-1).